A 117-amino-acid polypeptide reads, in one-letter code: Small ribosomal subunit protein bS6 (117 aa).

This sequence belongs to the bacterial ribosomal protein bS6 family.

Functionally, binds together with bS18 to 16S ribosomal RNA. The sequence is that of Small ribosomal subunit protein bS6 from Porphyromonas gingivalis (strain ATCC BAA-308 / W83).